We begin with the raw amino-acid sequence, 197 residues long: Probable UbiX-like flavin prenyltransferase (197 aa).

FMN contacts are provided by residues 9–11 (GAT), serine 36, 87–90 (SMKT), and arginine 122.

This sequence belongs to the UbiX/PAD1 family. YclB subfamily. As to quaternary structure, homododecamer.

It catalyses the reaction dimethylallyl phosphate + FMNH2 = prenylated FMNH2 + phosphate. In terms of biological role, flavin prenyltransferase that catalyzes the synthesis of the prenylated FMN cofactor (prenyl-FMN) for phenolic acid decarboxylase C. Involved in the decarboxylation and detoxification of phenolic derivatives under both aerobic and anaerobic conditions. This chain is Probable UbiX-like flavin prenyltransferase (ecdB), found in Escherichia coli O111:H-.